Reading from the N-terminus, the 1057-residue chain is Carbamoyl phosphate synthase large chain (1057 aa).

Residues 1 to 401 (MPKRDDIQTI…SLLKAIRSLE (401 aa)) are carboxyphosphate synthetic domain. Residues R129, R169, G175, G176, K208, I210, E215, G241, I242, H243, Q284, and E298 each coordinate ATP. The ATP-grasp 1 domain occupies 133–327 (RSLMNDLNVP…IAKLAAKIAV (195 aa)). The Mg(2+) site is built by Q284, E298, and N300. Mn(2+)-binding residues include Q284, E298, and N300. The interval 402-546 (YGVHHLGLPN…YGTYETENES (145 aa)) is oligomerization domain. The tract at residues 547–929 (IVTDKEKILV…ALYKGLTGSG (383 aa)) is carbamoyl phosphate synthetic domain. Residues 671 to 861 (EALLHTIDVP…MAQLAMQAIM (191 aa)) form the ATP-grasp 2 domain. Residues R707, R746, L748, E752, G777, V778, H779, S780, Q820, and E832 each contribute to the ATP site. Positions 820, 832, and 834 each coordinate Mg(2+). Residues Q820, E832, and N834 each coordinate Mn(2+). The MGS-like domain occupies 930–1057 (VEVKDHGTVL…ESMTFSMRTM (128 aa)). The interval 930-1057 (VEVKDHGTVL…ESMTFSMRTM (128 aa)) is allosteric domain.

It belongs to the CarB family. In terms of assembly, composed of two chains; the small (or glutamine) chain promotes the hydrolysis of glutamine to ammonia, which is used by the large (or ammonia) chain to synthesize carbamoyl phosphate. Tetramer of heterodimers (alpha,beta)4. Requires Mg(2+) as cofactor. The cofactor is Mn(2+).

It carries out the reaction hydrogencarbonate + L-glutamine + 2 ATP + H2O = carbamoyl phosphate + L-glutamate + 2 ADP + phosphate + 2 H(+). The enzyme catalyses hydrogencarbonate + NH4(+) + 2 ATP = carbamoyl phosphate + 2 ADP + phosphate + 2 H(+). The protein operates within amino-acid biosynthesis; L-arginine biosynthesis; carbamoyl phosphate from bicarbonate: step 1/1. Its pathway is pyrimidine metabolism; UMP biosynthesis via de novo pathway; (S)-dihydroorotate from bicarbonate: step 1/3. In terms of biological role, large subunit of the glutamine-dependent carbamoyl phosphate synthetase (CPSase). CPSase catalyzes the formation of carbamoyl phosphate from the ammonia moiety of glutamine, carbonate, and phosphate donated by ATP, constituting the first step of 2 biosynthetic pathways, one leading to arginine and/or urea and the other to pyrimidine nucleotides. The large subunit (synthetase) binds the substrates ammonia (free or transferred from glutamine from the small subunit), hydrogencarbonate and ATP and carries out an ATP-coupled ligase reaction, activating hydrogencarbonate by forming carboxy phosphate which reacts with ammonia to form carbamoyl phosphate. This chain is Carbamoyl phosphate synthase large chain, found in Staphylococcus haemolyticus (strain JCSC1435).